The sequence spans 464 residues: Sushi repeat-containing protein SRPX (464 aa).

A signal peptide spans 1–30; the sequence is MGSPAHRPALLLLLPPLLLLLLLRVPPSRS. O-linked (Xyl...) (chondroitin sulfate) serine glycosylation occurs at S34. 5 disulfide bridges follow: C57-C85, C69-C103, C89-C115, C120-C161, and C147-C174. Sushi domains lie at 57–117 and 118–176; these read CSPI…ICKQ and KRCP…SCVD. One can recognise an HYR domain in the interval 177-259; it reads MEPPRIKCPS…TCKFRVKVRV (83 aa). Residues 260–319 enclose the Sushi 3 domain; the sequence is KRCGKLNAPENGYMKCSSDGDNYGATCEFSCIGGYELQGSPARVCQSNLAWSGTEPTCAA. 2 disulfides stabilise this stretch: C262/C304 and C290/C317.

Detected in fibroblasts (at protein level). Retina and heart; less in placenta, pancreas, lung, liver, skeletal muscle, kidney and brain.

Its subcellular location is the cell surface. In terms of biological role, may be involved in phagocytosis during disk shedding, cell adhesion to cells other than the pigment epithelium or signal transduction. The chain is Sushi repeat-containing protein SRPX (SRPX) from Homo sapiens (Human).